The sequence spans 427 residues: Mucorpepsin (427 aa).

Positions 1-22 are cleaved as a signal peptide; it reads MLFSKISSAILLTAASFALTSA. Positions 23-66 are cleaved as a propeptide — activation peptide; the sequence is RPVSKQSDADDKLLALPLTSVNRKYSQTKHGQQAAEKLGGIKAF. In terms of domain architecture, Peptidase A1 spans 86 to 418; sequence YAIPVSIGTP…DFGKNRIGFA (333 aa). Aspartate 104 is a catalytic residue. Cysteine 117 and cysteine 123 are disulfide-bonded. The N-linked (GlcNAc...) asparagine glycan is linked to asparagine 254. The active site involves aspartate 303. A disulfide bridge connects residues cysteine 338 and cysteine 382.

This sequence belongs to the peptidase A1 family.

The enzyme catalyses Hydrolysis of proteins, favoring hydrophobic residues at P1 and P1'. Clots milk. Does not accept Lys at P1, and hence does not activate trypsinogen.. In terms of biological role, this enzyme, capable of clotting milk is frequently used for cheese production. The chain is Mucorpepsin from Rhizomucor pusillus.